We begin with the raw amino-acid sequence, 370 residues long: DNA repair protein RAD51 homolog 2 (370 aa).

109 to 116 (GPPGIGKS) contacts ATP.

This sequence belongs to the RecA family. RAD51 subfamily. As to expression, preferentially expressed in flower buds and roots.

It localises to the nucleus. In terms of biological role, may be involved in the homologous recombination repair (HRR) pathway of double-stranded DNA breaks arising during DNA replication or induced by DNA-damaging agents. The chain is DNA repair protein RAD51 homolog 2 (RAD51B) from Arabidopsis thaliana (Mouse-ear cress).